We begin with the raw amino-acid sequence, 201 residues long: ATP-dependent Clp protease proteolytic subunit (201 aa).

Serine 105 functions as the Nucleophile in the catalytic mechanism. Histidine 130 is an active-site residue.

The protein belongs to the peptidase S14 family. In terms of assembly, fourteen ClpP subunits assemble into 2 heptameric rings which stack back to back to give a disk-like structure with a central cavity, resembling the structure of eukaryotic proteasomes.

It localises to the cytoplasm. The catalysed reaction is Hydrolysis of proteins to small peptides in the presence of ATP and magnesium. alpha-casein is the usual test substrate. In the absence of ATP, only oligopeptides shorter than five residues are hydrolyzed (such as succinyl-Leu-Tyr-|-NHMec, and Leu-Tyr-Leu-|-Tyr-Trp, in which cleavage of the -Tyr-|-Leu- and -Tyr-|-Trp bonds also occurs).. Functionally, cleaves peptides in various proteins in a process that requires ATP hydrolysis. Has a chymotrypsin-like activity. Plays a major role in the degradation of misfolded proteins. The chain is ATP-dependent Clp protease proteolytic subunit from Aquifex aeolicus (strain VF5).